The primary structure comprises 57 residues: Mambaquaretin-1 (57 aa).

Positions 5 to 55 (CNLPVKPGPCNGFFSAFYYSQKTNKCHSFTYGGCKGNANRFSTIEKCRRTC) constitute a BPTI/Kunitz inhibitor domain. 3 disulfide bridges follow: cysteine 5–cysteine 55, cysteine 14–cysteine 38, and cysteine 30–cysteine 51. The interval 15 to 16 (NG) is important for binding V2R.

It belongs to the venom Kunitz-type family. In terms of tissue distribution, expressed by the venom gland.

Its subcellular location is the secreted. Selectively interacts with vasopressin V2 receptor (V2R/AVPR2) and fully inhibits three major signaling pathways of this receptor that are GalphaS protein, the interaction with beta-arrestin and activation of MAP kinase. Inhibits vasopressin binding human V2R in the nanomolar range (Ki=5.02 nM), and also potently inhibits vasopressin-induced cAMP production (IC(50)=94 nM). In vivo, this protein shows an aquaretic effect. Urine output increases and urine osmolality decreases dramatically under treatment with this protein, without differences observed between healthy mice and the pcy mice model of the autosomal-dominant polycystic kidney disease (ADPKD). This protein does not modify electrolyte, protein and urea excretions in the urine samples, but produces a 3-fold decrease of creatinine levels. Intraperitoneal injection of this protein into the pcy mice significantly reduces the number of renal cysts and the total area of cysts. This protein also shows high efficacy in preventing hyponatremia in rat models (induced by DAVP). Is highly visible in mice liver and kidney after intravenous injection. Is rapidly eliminated in the liver, whereas it exhibits slow elimination in the kidney due to the high expression of V2R which acts as a reservoir. In addition, its elimination from blood is rapid. Fluorescent MQ1 probes could also be used for imaging V2R-overexpressing cancer cells; note that these probes label the three renal cancer cell lines CAKI-2, ACHN and A498 that highly express V2R. In vivo, does not show any toxicity on animals, even at highest doses tested, such as prostration, spidy coat, appetite or weight loss. The chain is Mambaquaretin-1 from Dendroaspis angusticeps (Eastern green mamba).